The following is a 697-amino-acid chain: tRNA 5-methylaminomethyl-2-thiouridine biosynthesis bifunctional protein MnmC (697 aa).

Positions 1 to 272 (MPKPASMAMN…KREMLTAVMS (272 aa)) are tRNA (mnm(5)s(2)U34)-methyltransferase. The interval 300–697 (IGAGVAGLLT…HKHKTRQAVI (398 aa)) is FAD-dependent cmnm(5)s(2)U34 oxidoreductase.

It in the N-terminal section; belongs to the methyltransferase superfamily. tRNA (mnm(5)s(2)U34)-methyltransferase family. In the C-terminal section; belongs to the DAO family. It depends on FAD as a cofactor.

It is found in the cytoplasm. The catalysed reaction is 5-aminomethyl-2-thiouridine(34) in tRNA + S-adenosyl-L-methionine = 5-methylaminomethyl-2-thiouridine(34) in tRNA + S-adenosyl-L-homocysteine + H(+). Its function is as follows. Catalyzes the last two steps in the biosynthesis of 5-methylaminomethyl-2-thiouridine (mnm(5)s(2)U) at the wobble position (U34) in tRNA. Catalyzes the FAD-dependent demodification of cmnm(5)s(2)U34 to nm(5)s(2)U34, followed by the transfer of a methyl group from S-adenosyl-L-methionine to nm(5)s(2)U34, to form mnm(5)s(2)U34. The sequence is that of tRNA 5-methylaminomethyl-2-thiouridine biosynthesis bifunctional protein MnmC from Psychrobacter cryohalolentis (strain ATCC BAA-1226 / DSM 17306 / VKM B-2378 / K5).